Reading from the N-terminus, the 289-residue chain is Proteasome subunit beta (289 aa).

A propeptide spans 1–55 (MTWPLPDRLSINSAISGSAVDLSSFAEFLRRQAPELLPASIKHGGGAVGDQLPHA) (removed in mature form; by autocatalysis). The active-site Nucleophile is the threonine 56.

Belongs to the peptidase T1B family. In terms of assembly, the 20S proteasome core is composed of 14 alpha and 14 beta subunits that assemble into four stacked heptameric rings, resulting in a barrel-shaped structure. The two inner rings, each composed of seven catalytic beta subunits, are sandwiched by two outer rings, each composed of seven alpha subunits. The catalytic chamber with the active sites is on the inside of the barrel. Has a gated structure, the ends of the cylinder being occluded by the N-termini of the alpha-subunits. Is capped by the proteasome-associated ATPase, ARC.

The protein resides in the cytoplasm. The enzyme catalyses Cleavage of peptide bonds with very broad specificity.. It participates in protein degradation; proteasomal Pup-dependent pathway. With respect to regulation, the formation of the proteasomal ATPase ARC-20S proteasome complex, likely via the docking of the C-termini of ARC into the intersubunit pockets in the alpha-rings, may trigger opening of the gate for substrate entry. Interconversion between the open-gate and close-gate conformations leads to a dynamic regulation of the 20S proteasome proteolysis activity. Component of the proteasome core, a large protease complex with broad specificity involved in protein degradation. The chain is Proteasome subunit beta from Mycobacterium marinum (strain ATCC BAA-535 / M).